A 543-amino-acid polypeptide reads, in one-letter code: Cobyric acid synthase (543 aa).

A GATase cobBQ-type domain is found at 260 to 483 (MLDIVLVDLP…LHGVFDADGF (224 aa)). The Nucleophile role is filled by C346. H475 is a catalytic residue.

The protein belongs to the CobB/CobQ family. CobQ subfamily.

It participates in cofactor biosynthesis; adenosylcobalamin biosynthesis. Its function is as follows. Catalyzes amidations at positions B, D, E, and G on adenosylcobyrinic A,C-diamide. NH(2) groups are provided by glutamine, and one molecule of ATP is hydrogenolyzed for each amidation. The sequence is that of Cobyric acid synthase from Nitratidesulfovibrio vulgaris (strain ATCC 29579 / DSM 644 / CCUG 34227 / NCIMB 8303 / VKM B-1760 / Hildenborough) (Desulfovibrio vulgaris).